Consider the following 500-residue polypeptide: NAD(P)H-quinone oxidoreductase chain 4, chloroplastic (500 aa).

14 helical membrane-spanning segments follow: residues 4–24, 35–55, 87–107, 113–130, 134–154, 167–187, 211–231, 242–262, 272–292, 305–325, 330–350, 386–406, 416–436, and 462–482; these read FPWLTIIVVFPISAGSLMLFL, YTICICILELLITTYAFCYNF, IGTILLTGFITTLATLAAFPV, LFHFLMLAMYSGQIGSFS, LLLFFIMWELELIPVYLLLSM, FILYTAGSSIFLLIGVLGISL, ILFYIGFVIALTVKSPIIPLH, HYSTCMLLAGILLKMGAYGLV, AHSLFSPWLMAVGTIQIIYAA, IAYSSVSHMGFIIIGIGSITD, GAILQIISHGFIGAALFFLAG, LALPGMSGFVAELIVFFGIIT, ILIIFVMAIGIILTPIYLLSM, and LFLSISILLPIIGIGIYPDFV.

This sequence belongs to the complex I subunit 4 family.

Its subcellular location is the plastid. It localises to the chloroplast thylakoid membrane. The enzyme catalyses a plastoquinone + NADH + (n+1) H(+)(in) = a plastoquinol + NAD(+) + n H(+)(out). It catalyses the reaction a plastoquinone + NADPH + (n+1) H(+)(in) = a plastoquinol + NADP(+) + n H(+)(out). The sequence is that of NAD(P)H-quinone oxidoreductase chain 4, chloroplastic from Draba nemorosa (Woodland whitlowgrass).